An 877-amino-acid chain; its full sequence is GTPase activating protein homolog 2 (877 aa).

Residues 14 to 285 (FKFTDNLWDG…SVEMIDITND (272 aa)) form the F-BAR domain. Residues 130–214 (QEGIKLKQDM…SNCDEEYREQ (85 aa)) are a coiled coil. Residues 374 to 560 (VSLDELMNRQ…TLIKQIPPPL (187 aa)) enclose the Rho-GAP domain. 3 disordered regions span residues 589–612 (DQLS…GSGS), 644–704 (LPPL…AEPT), and 749–800 (AATP…LAST). 3 stretches are compositionally biased toward low complexity: residues 593–612 (NDDN…GSGS), 653–676 (SGSG…SPTT), and 749–779 (AATP…STST). The segment covering 780 to 800 (IKTSSPDRTTPLTSSPPLAST) has biased composition (polar residues).

The protein localises to the cytoplasm. It localises to the contractile vacuole. Functionally, rho GTPase-activating protein involved in the signal transduction pathway. Regulator of the contractile vacuole network as well as involved in driving vacuole emptying. This Dictyostelium discoideum (Social amoeba) protein is GTPase activating protein homolog 2 (mgp2).